Reading from the N-terminus, the 199-residue chain is Prolactin-2 (199 aa).

3 disulfides stabilise this stretch: cysteine 4/cysteine 11, cysteine 58/cysteine 174, and cysteine 191/cysteine 199.

Belongs to the somatotropin/prolactin family.

It localises to the secreted. This is Prolactin-2 from Alligator mississippiensis (American alligator).